The following is a 948-amino-acid chain: Receptor-like protein 45 (948 aa).

The signal sequence occupies residues 1-26 (MSSSKLMDFGLTWIIMMMILLQGCRS). Over 27–897 (CIESERQGLL…EDDDESGLLD (871 aa)) the chain is Extracellular. Asn99 and Asn113 each carry an N-linked (GlcNAc...) asparagine glycan. LRR repeat units follow at residues 106–129 (FEELQSLNLSSGYFKGWFDERKGG) and 135–162 (LRNLETLDLGVNFYDTSVLPYLNEAVSL). The stretch at 163-183 (KTLILHDNLFKGGFPVQELIN) is one LRR 3; degenerate repeat. A glycan (N-linked (GlcNAc...) asparagine) is linked at Asn183. LRR repeat units lie at residues 184-208 (LTSLEVLDLKFNKFSGQLPTQELTN), 210-233 (RNLRALDLSNNKFSGSLQKQGICR), 234-257 (LEQLQELRLSRNRFEGEIPLCFSR), 258-284 (FSKLRVLDLSSNHLSGKIPYFISDFKS), 286-306 (EYLSLLDNDFEGLFSLGLITE), 307-332 (LTELKVFKLSSRSGMLQIVETNVSGG), 334-357 (QSQLSSIMLSHCNLGKIPGFLWYQ), 358-381 (QELRVIDLSNNILSGVFPTWLLEN), 382-404 (NTELQALLLQNNSFKTLTLPRTM), 405-429 (RRLQILDLSVNNFNNQLPKDVGLIL), 430-453 (ASLRHLNLSNNEFLGNMPSSMARM), 454-477 (ENIEFMDLSYNNFSGKLPRNLFTG), 479-502 (YSLSWLKLSHNRFSGPIIRKSSDE), 503-526 (TSLITLIMDNNMFTGKIPRTLLNL), 527-549 (RMLSVIDLSNNLLTGTIPRWLGN), 550-573 (FFLEVLRISNNRLQGAIPPSLFNI), 575-595 (YLWLLDLSGNFLSGSLPLRSS), 596-618 (SDYGYILDLHNNNLTGSIPDTLW), 619-640 (YGLRLLDLRNNKLSGNIPLFRS), 642-665 (PSISVVLLRENNLTGKIPVELCGL), 666-689 (SNVRMLDFAHNRLNESIPSCVTNL), 758-782 (LNQMFGLDLSSNELSGNIPEELGDL), 783-805 (KRVRSLNLSRNSLSGSIPGSFSN), 807-831 (RSIESLDLSFNKLHGTIPSQLTLLQ), and 833-855 (LVVFNVSYNNLSGVIPQGKQFNT). Residue Asn328 is glycosylated (N-linked (GlcNAc...) asparagine). Residues Asn381 and Asn392 are each glycosylated (N-linked (GlcNAc...) asparagine). Residues Asn436 and Asn465 are each glycosylated (N-linked (GlcNAc...) asparagine). Asn608 carries N-linked (GlcNAc...) asparagine glycosylation. N-linked (GlcNAc...) asparagine glycosylation is found at Asn653, Asn679, and Asn688. N-linked (GlcNAc...) asparagine glycosylation is present at Asn789. 2 N-linked (GlcNAc...) asparagine glycosylation sites follow: Asn837 and Asn842. Residues 898–918 (IVVLWWSLGTTYVTVMMGFLV) form a helical membrane-spanning segment. Topologically, residues 919–948 (FLCFDSPWRRAWFCLVDTFIDRVKDVLGVI) are cytoplasmic.

Belongs to the RLP family.

It localises to the cell membrane. In Arabidopsis thaliana (Mouse-ear cress), this protein is Receptor-like protein 45.